The sequence spans 516 residues: Methionine--tRNA ligase (516 aa).

The 'HIGH' region motif lies at Ser-14–His-24. The short motif at Lys-302 to Ser-306 is the 'KMSKS' region element. Lys-305 contacts ATP.

This sequence belongs to the class-I aminoacyl-tRNA synthetase family. MetG type 2B subfamily. As to quaternary structure, monomer.

Its subcellular location is the cytoplasm. The enzyme catalyses tRNA(Met) + L-methionine + ATP = L-methionyl-tRNA(Met) + AMP + diphosphate. Functionally, is required not only for elongation of protein synthesis but also for the initiation of all mRNA translation through initiator tRNA(fMet) aminoacylation. The protein is Methionine--tRNA ligase of Rhizobium meliloti (strain 1021) (Ensifer meliloti).